Reading from the N-terminus, the 384-residue chain is Na(+)/H(+) antiporter NhaA (384 aa).

11 helical membrane passes run 9 to 29 (NLETIGGILLFIAAVLAIIIA), 58 to 78 (LLLWINDGLMAIYFLLIGLEI), 94 to 114 (LVPALTALAGLLFPALIFIFF), 124 to 144 (GWAIPTATDIAFTLGIVSLLG), 153 to 173 (ILLTAIAIFDDIAAIVIIALF), 179 to 199 (SLLSLSLALVFTLILIGLNYF), 204 to 224 (ISVFMLFGVALWIAVLKSGVH), 256 to 276 (VVFLILPLFAFANAGVSFVGL), 285 to 305 (VVLGIGLGLFLGKQLGIFLSL), 325 to 345 (VYGIALICGVGFTMSLFIGSL), and 357 to 377 (MVKIGVVFGSFIAGLTGFLVL).

The protein belongs to the NhaA Na(+)/H(+) (TC 2.A.33) antiporter family.

It is found in the cell inner membrane. It catalyses the reaction Na(+)(in) + 2 H(+)(out) = Na(+)(out) + 2 H(+)(in). Functionally, na(+)/H(+) antiporter that extrudes sodium in exchange for external protons. The protein is Na(+)/H(+) antiporter NhaA of Legionella pneumophila (strain Lens).